The primary structure comprises 962 residues: MPRSTWFKALLLLVALWAPLSQAETGWQPIQETIRKSDKDNRQYQAIRLDNGMVVLLVSDPQAVKSLSALVVPVGSLEDPEAYQGLAHYLEHMSLMGSKKYPQADSLAEYLKMHGGSHNASTAPYRTAFYLEVENDALPGAVDRLADAIAEPLLDKKYAERERNAVNAELTMARTRDGMRMAQVSAETINPAHPGSKFSGGNLETLSDKPGNPVQQALKDFHEKYYSANLMKAVIYSNKPLPELAKMAADTFGRVPNKESKKPEITVPVVTDAQKGIIIHYVPALPRKVLRVEFRIDNNSAKFRSKTDELITYLIGNRSPGTLSDWLQKQGLVEGISANSDPIVNGNSGVLAISASLTDKGLANRDQVVAAIFSYLNLLREKGIDKQYFDELANVLDIDFRYPSITRDMDYVEWLADTMIRVPVEHTLDAVNIADRYDAKAVKERLAMMTPQNARIWYISPKEPHNKTAYFVDAPYQVDKISEQTFADWQQKAANIALSLPELNPYIPDDFSLIKSEKKYDHPELIVDESNLRVVYAPSRYFSSEPKADVSLILRNPKAMDSARNQVMFALNDYLAGLALDQLSNQASVGGISFSTNANNGLMVNANGYTQRLPQLFQALLEGYFSYTATEDQLEQAKSWYNQMMDSAEKGKAFEQAIMPAQMLSQVPYFSRDERRKILPSITLKEVLAYRDALKSGARPEFMVIGNMTEAQATTLARDVQKQLGADGSEWCRNKDVVVDKKQSVIFEKAGNSTDSALAAVFVPTGYDEYTSSAYSSLLGQIVQPWFYNQLRTEEQLGYAVFAFPMSVGRQWGMGFLLQSNDKQPSFLWERYKAFFPTAEAKLRAMKPDEFAQIQQAVITQMLQAPQTLGEEALKLSKDFDRGNMRFDSRDKIVAQIKLLTPQKLADFFHQAVVEPQGMAILSQISGSQNGKAEYVHPEGWKVWENVSALQQTMPLMSEKNE.

The N-terminal stretch at 1-23 is a signal peptide; it reads MPRSTWFKALLLLVALWAPLSQA. Histidine 88 contacts Zn(2+). Glutamate 91 (proton acceptor) is an active-site residue. Zn(2+)-binding residues include histidine 92 and glutamate 169.

The protein belongs to the peptidase M16 family. In terms of assembly, monomer. Zn(2+) serves as cofactor.

The protein resides in the periplasm. The catalysed reaction is Preferential cleavage of 16-Tyr-|-Leu-17 and 25-Phe-|-Tyr-26 bonds of oxidized insulin B chain. Also acts on other substrates of Mw less than 7 kDa such as insulin and glucagon.. Functionally, endopeptidase that degrades small peptides of less than 7 kDa, such as glucagon and insulin. The sequence is that of Protease 3 (ptrA) from Escherichia coli O157:H7.